A 96-amino-acid chain; its full sequence is Growth-regulated alpha protein (96 aa).

Residues 1–24 form the signal peptide; the sequence is MVSATRSLLCAALPVLATSRQATG. Cystine bridges form between Cys33/Cys59 and Cys35/Cys75.

This sequence belongs to the intercrine alpha (chemokine CxC) family. Monomer and homodimer. In terms of tissue distribution, at least expressed in the lung and trachea.

The protein localises to the secreted. In terms of biological role, has chemotactic activity for neutrophils. Contributes to neutrophil activation during inflammation. The sequence is that of Growth-regulated alpha protein (Cxcl1) from Rattus norvegicus (Rat).